Reading from the N-terminus, the 95-residue chain is Cell division topological specificity factor (95 aa).

It belongs to the MinE family.

In terms of biological role, prevents the cell division inhibition by proteins MinC and MinD at internal division sites while permitting inhibition at polar sites. This ensures cell division at the proper site by restricting the formation of a division septum at the midpoint of the long axis of the cell. The protein is Cell division topological specificity factor of Microcystis aeruginosa (strain NIES-843 / IAM M-2473).